Consider the following 213-residue polypeptide: 3-dehydroquinate dehydratase (213 aa).

3-dehydroquinate is bound by residues 27 to 29 (EVR) and Arg-53. The Proton donor/acceptor role is filled by His-111. The active-site Schiff-base intermediate with substrate is the Lys-138. 3-dehydroquinate-binding residues include Arg-175 and Gln-197.

The protein belongs to the type-I 3-dehydroquinase family. In terms of assembly, homodimer.

It carries out the reaction 3-dehydroquinate = 3-dehydroshikimate + H2O. Its pathway is metabolic intermediate biosynthesis; chorismate biosynthesis; chorismate from D-erythrose 4-phosphate and phosphoenolpyruvate: step 3/7. Its function is as follows. Involved in the third step of the chorismate pathway, which leads to the biosynthesis of aromatic amino acids. Catalyzes the cis-dehydration of 3-dehydroquinate (DHQ) and introduces the first double bond of the aromatic ring to yield 3-dehydroshikimate. In Thermococcus gammatolerans (strain DSM 15229 / JCM 11827 / EJ3), this protein is 3-dehydroquinate dehydratase.